A 276-amino-acid chain; its full sequence is Large ribosomal subunit protein uL2 (276 aa).

Disordered stretches follow at residues 38-59 (FQKS…GGHK) and 225-276 (VMNP…RHKR). Residues 39–49 (QKSGRNNNGHI) are compositionally biased toward polar residues. Residues 50-59 (TTRHKGGGHK) show a composition bias toward basic residues.

Belongs to the universal ribosomal protein uL2 family. In terms of assembly, part of the 50S ribosomal subunit. Forms a bridge to the 30S subunit in the 70S ribosome.

Its function is as follows. One of the primary rRNA binding proteins. Required for association of the 30S and 50S subunits to form the 70S ribosome, for tRNA binding and peptide bond formation. It has been suggested to have peptidyltransferase activity; this is somewhat controversial. Makes several contacts with the 16S rRNA in the 70S ribosome. This Cupriavidus necator (strain ATCC 17699 / DSM 428 / KCTC 22496 / NCIMB 10442 / H16 / Stanier 337) (Ralstonia eutropha) protein is Large ribosomal subunit protein uL2.